The chain runs to 345 residues: MMTRESIDKRAGRRGPNLNIVLTCPECKVYPPKIVERFSEGDVVCALCGLVLSDKLVDTRSEWRTFSNDDHNGDDPSRVGEASNPLLDGNNLSTRIGKGETTDMRFTKELNKAQGKNVMDKKDNEVQAAFAKITMLCDAAELPKIVKDCAKEAYKLCHDEKTLKGKSMESIMAASILIGCRRAEVARTFKEIQSLIHVKTKEFGKTLNIMKNILRGKSEDGFLKIDTDNMSGAQNLTYIPRFCSHLGLPMQVTTSAEYTAKKCKEIKEIAGKSPITIAVVSIYLNILLFQIPITAAKVGQTLQVTEGTIKSGYKILYEHRDKLVDPQLIANGVVSLDNLPGVEKK.

The TFIIB-type zinc finger occupies 20-53; sequence IVLTCPECKVYPPKIVERFSEGDVVCALCGLVLS. The Zn(2+) site is built by cysteine 24, cysteine 27, cysteine 45, and cysteine 48. Residues 65–78 show a composition bias toward basic and acidic residues; that stretch reads TFSNDDHNGDDPSR. The segment at 65 to 93 is disordered; the sequence is TFSNDDHNGDDPSRVGEASNPLLDGNNLS. Repeat copies occupy residues 136-212 and 242-318.

This sequence belongs to the TFIIB family. As to quaternary structure, associates with TFIID-IIA (DA complex) to form TFIID-IIA-IIB (DAB-complex) which is then recognized by polymerase II.

Its subcellular location is the nucleus. Functionally, general factor that plays a major role in the activation of eukaryotic genes transcribed by RNA polymerase II. The sequence is that of Transcription initiation factor IIB (SUA7) from Saccharomyces cerevisiae (strain ATCC 204508 / S288c) (Baker's yeast).